Reading from the N-terminus, the 376-residue chain is Ribosomal RNA large subunit methyltransferase G (376 aa).

The protein belongs to the methyltransferase superfamily. RlmG family.

The protein localises to the cytoplasm. The enzyme catalyses guanosine(1835) in 23S rRNA + S-adenosyl-L-methionine = N(2)-methylguanosine(1835) in 23S rRNA + S-adenosyl-L-homocysteine + H(+). In terms of biological role, specifically methylates the guanine in position 1835 (m2G1835) of 23S rRNA. In Klebsiella pneumoniae (strain 342), this protein is Ribosomal RNA large subunit methyltransferase G.